Consider the following 765-residue polypeptide: FHF complex subunit HOOK interacting protein 2A (765 aa).

Disordered regions lie at residues 193–236 (TLKG…DHLS) and 532–561 (TDIS…KNDG). 2 stretches are compositionally biased toward polar residues: residues 196 to 208 (GQDS…GQSR) and 535 to 550 (SPEN…SSSP).

The protein belongs to the FHIP family. As to expression, expressed in all tissues tested, highly expressed brain. Only detected at high levels in testis.

Its function is as follows. Required for proper functioning of the nervous system. In Homo sapiens (Human), this protein is FHF complex subunit HOOK interacting protein 2A.